Reading from the N-terminus, the 298-residue chain is Cytochrome c oxidase subunit 2 (298 aa).

Positions 1-29 (MMAIATKRRGVAAVMSLGVATMTAVPALA) are cleaved as a signal peptide. The residue at position 30 (Gln-30) is a Pyrrolidone carboxylic acid. At 30–55 (QDVLGDLPVIGKPVNGGMNFQPASSP) the chain is on the periplasmic side. Residues 56 to 88 (LAHDQQWLDHFVLYIITAVTIFVCLLLLICIVR) form a helical membrane-spanning segment. The Cytoplasmic portion of the chain corresponds to 89–103 (FNRRANPVPARFTHN). The chain crosses the membrane as a helical span at residues 104–134 (TPIEVIWTLVPVLILVAIGAFSLPILFRSQE). The Periplasmic segment spans residues 135–280 (MPNDPDLVIK…WLAGAKEEFA (146 aa)). The Cu cation site is built by His-210, Cys-245, Glu-247, Cys-249, His-253, and Met-256. A propeptide spans 281-298 (ADASDYLPASPVKLASAE) (C-terminal propeptide).

This sequence belongs to the cytochrome c oxidase subunit 2 family. Binuclear copper center (CuA) is required as a cofactor.

It is found in the cell inner membrane. The catalysed reaction is 4 Fe(II)-[cytochrome c] + O2 + 8 H(+)(in) = 4 Fe(III)-[cytochrome c] + 2 H2O + 4 H(+)(out). Its function is as follows. Subunits I and II form the functional core of the enzyme complex. Electrons originating in cytochrome c are transferred via heme a and Cu(A) to the binuclear center formed by heme a3 and Cu(B). The polypeptide is Cytochrome c oxidase subunit 2 (ctaC) (Paracoccus denitrificans).